The sequence spans 215 residues: Variable small protein 2 (215 aa).

A signal peptide spans 1–18; the sequence is MRKRISAIIMTLFMVFMS. The N-palmitoyl cysteine moiety is linked to residue cysteine 19. Cysteine 19 carries S-diacylglycerol cysteine lipidation.

The protein belongs to the variable small protein (Vsp) family.

The protein resides in the cell outer membrane. Functionally, the Vlp and Vsp proteins are antigenically distinct proteins, only one vlp or vsp gene is transcriptionally active at any one time. Switching between these genes is a mechanism of host immune response evasion. The protein is Variable small protein 2 of Borrelia hermsii.